Reading from the N-terminus, the 168-residue chain is Small ribosomal subunit protein uS5 (168 aa).

The region spanning Phe14–Val77 is the S5 DRBM domain.

Belongs to the universal ribosomal protein uS5 family. As to quaternary structure, part of the 30S ribosomal subunit. Contacts proteins S4 and S8.

Functionally, with S4 and S12 plays an important role in translational accuracy. In terms of biological role, located at the back of the 30S subunit body where it stabilizes the conformation of the head with respect to the body. This chain is Small ribosomal subunit protein uS5, found in Lactococcus lactis subsp. cremoris (strain MG1363).